A 407-amino-acid chain; its full sequence is uncharacterized protein (407 aa).

The stretch at 10–37 (DKLEQLANDVVTELTDMENKYKDLHVEL) forms a coiled coil.

This is an uncharacterized protein from Bacillus subtilis (strain 168).